Consider the following 190-residue polypeptide: Acireductone dioxygenase (190 aa).

The Fe(2+) site is built by H101, H103, E107, and H145. 4 residues coordinate Ni(2+): H101, H103, E107, and H145.

This sequence belongs to the acireductone dioxygenase (ARD) family. Monomer. Fe(2+) is required as a cofactor. Requires Ni(2+) as cofactor.

The catalysed reaction is 1,2-dihydroxy-5-(methylsulfanyl)pent-1-en-3-one + O2 = 3-(methylsulfanyl)propanoate + CO + formate + 2 H(+). It carries out the reaction 1,2-dihydroxy-5-(methylsulfanyl)pent-1-en-3-one + O2 = 4-methylsulfanyl-2-oxobutanoate + formate + 2 H(+). The protein operates within amino-acid biosynthesis; L-methionine biosynthesis via salvage pathway; L-methionine from S-methyl-5-thio-alpha-D-ribose 1-phosphate: step 5/6. In terms of biological role, catalyzes 2 different reactions between oxygen and the acireductone 1,2-dihydroxy-3-keto-5-methylthiopentene (DHK-MTPene) depending upon the metal bound in the active site. Fe-containing acireductone dioxygenase (Fe-ARD) produces formate and 2-keto-4-methylthiobutyrate (KMTB), the alpha-ketoacid precursor of methionine in the methionine recycle pathway. Ni-containing acireductone dioxygenase (Ni-ARD) produces methylthiopropionate, carbon monoxide and formate, and does not lie on the methionine recycle pathway. The protein is Acireductone dioxygenase of Saccharopolyspora erythraea (strain ATCC 11635 / DSM 40517 / JCM 4748 / NBRC 13426 / NCIMB 8594 / NRRL 2338).